Here is a 613-residue protein sequence, read N- to C-terminus: Thymidine kinase (613 aa).

Disordered regions lie at residues 1–233 and 253–276; these read MAEG…GVKS and SDGE…ATPR. Positions 8–18 are enriched in low complexity; the sequence is FSSSSTSSEEA. Residues 78 to 88 show a composition bias toward basic and acidic residues; the sequence is PKNEPRPERGK. Residues 114–126 are compositionally biased toward basic residues; the sequence is LGSRTRSKSRSRD. Basic and acidic residues predominate over residues 199–218; sequence HRYDKPSYDEEVCQKKDKGG. 301 to 308 serves as a coordination point for ATP; sequence GSMGVGKT. E327 functions as the Proton acceptor in the catalytic mechanism. 3 residues coordinate substrate: Y344, Q365, and R461.

Belongs to the herpesviridae thymidine kinase family. In terms of assembly, homodimer.

It catalyses the reaction thymidine + ATP = dTMP + ADP + H(+). Its function is as follows. Catalyzes the transfer of the gamma-phospho group of ATP to thymidine to generate dTMP in the salvage pathway of pyrimidine synthesis. The dTMP serves as a substrate for DNA polymerase during viral DNA replication. Allows the virus to be reactivated and to grow in non-proliferative cells lacking a high concentration of phosphorylated nucleic acid precursors. This Equine herpesvirus 2 (strain 86/87) (EHV-2) protein is Thymidine kinase.